A 642-amino-acid chain; its full sequence is 2-oxoacid:ferredoxin oxidoreductase 2, subunit alpha (642 aa).

The YPITP motif signature appears at 263–267; it reads YPITP. 2 residues coordinate substrate: Thr266 and Arg356.

As to quaternary structure, heterodimer composed of an alpha and a beta subunit.

The catalysed reaction is a 2-oxocarboxylate + 2 oxidized [2Fe-2S]-[ferredoxin] + CoA = an acyl-CoA + 2 reduced [2Fe-2S]-[ferredoxin] + CO2 + H(+). Functionally, catalyzes the coenzyme A-dependent oxidative decarboxylation of different 2-oxoacids such as pyruvate, 2-oxobutyrate, glyoxylate and 2-oxoglutarate to form their CoA derivatives. The protein is 2-oxoacid:ferredoxin oxidoreductase 2, subunit alpha of Aeropyrum pernix (strain ATCC 700893 / DSM 11879 / JCM 9820 / NBRC 100138 / K1).